The following is a 200-amino-acid chain: Shikimate kinase (200 aa).

ATP is bound at residue Gly33–Thr38. Mg(2+) is bound at residue Ser37. Residues Asp55, Arg79, and Gly101 each coordinate substrate. Arg139 is an ATP binding site. Arg158 is a substrate binding site.

It belongs to the shikimate kinase family. In terms of assembly, monomer. Mg(2+) is required as a cofactor.

Its subcellular location is the cytoplasm. The catalysed reaction is shikimate + ATP = 3-phosphoshikimate + ADP + H(+). It participates in metabolic intermediate biosynthesis; chorismate biosynthesis; chorismate from D-erythrose 4-phosphate and phosphoenolpyruvate: step 5/7. Its function is as follows. Catalyzes the specific phosphorylation of the 3-hydroxyl group of shikimic acid using ATP as a cosubstrate. This is Shikimate kinase from Brucella abortus (strain S19).